Consider the following 320-residue polypeptide: N-acetylneuraminate lyase (320 aa).

Residues Thr51 and Thr52 each contribute to the aceneuramate site. Tyr143 (proton donor) is an active-site residue. Lys173 serves as the catalytic Schiff-base intermediate with substrate. Positions 175, 199, 201, 202, and 218 each coordinate aceneuramate.

The protein belongs to the DapA family. NanA subfamily. Homotetramer. As to expression, isoform 2 is expressed in placenta, liver, kidney, pancreas, spleen, thymus, ovary, small intestine and peripheral blood leukocyte.

It localises to the cytoplasm. The enzyme catalyses aceneuramate = aldehydo-N-acetyl-D-mannosamine + pyruvate. It functions in the pathway amino-sugar metabolism; N-acetylneuraminate degradation. Its function is as follows. Catalyzes the cleavage of N-acetylneuraminic acid (sialic acid) to form pyruvate and N-acetylmannosamine via a Schiff base intermediate. It prevents sialic acids from being recycled and returning to the cell surface. Involved in the N-glycolylneuraminic acid (Neu5Gc) degradation pathway. Although human is not able to catalyze formation of Neu5Gc due to the inactive CMAHP enzyme, Neu5Gc is present in food and must be degraded. The polypeptide is N-acetylneuraminate lyase (Homo sapiens (Human)).